A 481-amino-acid polypeptide reads, in one-letter code: 6-phosphogluconate dehydrogenase, decarboxylating (481 aa).

Residues Gly-11–Gly-16, Asn-34–Thr-36, Val-76–Ala-78, and Asn-104 contribute to the NADP(+) site. Residues Asn-104 and Ser-130–Gly-132 contribute to the substrate site. The Proton acceptor role is filled by Lys-184. His-187–Asn-188 provides a ligand contact to substrate. Glu-191 (proton donor) is an active-site residue. Residues Tyr-192, Lys-259, Arg-286, Arg-445, and His-451 each coordinate substrate.

The protein belongs to the 6-phosphogluconate dehydrogenase family. In terms of assembly, homodimer.

It catalyses the reaction 6-phospho-D-gluconate + NADP(+) = D-ribulose 5-phosphate + CO2 + NADPH. It participates in carbohydrate degradation; pentose phosphate pathway; D-ribulose 5-phosphate from D-glucose 6-phosphate (oxidative stage): step 3/3. In terms of biological role, catalyzes the oxidative decarboxylation of 6-phosphogluconate to ribulose 5-phosphate and CO(2), with concomitant reduction of NADP to NADPH. This is 6-phosphogluconate dehydrogenase, decarboxylating (Pgd) from Ceratitis capitata (Mediterranean fruit fly).